Reading from the N-terminus, the 172-residue chain is Small t antigen (172 aa).

Position 1 is an N-acetylmethionine; by host (M1). A J domain is found at 12–75 (ELMDLLGLER…VKVAHQPDFG (64 aa)). A C4-type; atypical zinc finger spans residues 101–114 (CATKPSAHCPCMLC). An H1C3-type; atypical zinc finger spans residues 120–141 (HVYRKFLRRDPLVWIDCYCFDC).

As to quaternary structure, interacts with host PPP2R1A; the interaction inhibits PP2A activity.

The protein resides in the host cytoplasm. It localises to the host nucleus. Its function is as follows. Promotes efficient viral genome replication by accelerating both G1 and S phase progression of the cell cycle. Inhibits host PP2A by binding to the A subunit, thereby displacing lower affinity regulatory B subunit. Inactivation of PP2A in turn results in the transactivation of cyclin A and cyclin D1 promoters. Late during the infection cycle, ST may induce dephosphorylation of host MTOR, leading to the inhibition of cap-dependent translation. May establish and maintain high levels of viral genomes during persistent infection in cell culture. The protein is Small t antigen of Simian virus 12 (strain wt100) (SV-12).